We begin with the raw amino-acid sequence, 199 residues long: MSTTRMISDNERRFVDYLNSSFMPFWRRTAFVYKCELAFSILILFCAFAELIFYDCFVIFFLMIIASFVFVLLYLEFYFGSVYNCPALLHLHTLSAAFMSMVCWLSVLIPIFFGESIYIASRYVAHVIYKYYGCQVIFGSLLTTFAAASFARRKEIKSVELSHVDYLKRLMKLTSKVAEDVQKEAKSFELELLDIHSYS.

The next 4 helical transmembrane spans lie at Cys35 to Asp55, Phe57 to Phe77, Leu94 to Gly114, and Tyr131 to Ala151.

It is found in the membrane. This is an uncharacterized protein from Caenorhabditis elegans.